The primary structure comprises 258 residues: UPF0246 protein mma_1385 (258 aa).

It belongs to the UPF0246 family.

This chain is UPF0246 protein mma_1385, found in Janthinobacterium sp. (strain Marseille) (Minibacterium massiliensis).